Here is a 458-residue protein sequence, read N- to C-terminus: tRNA-2-methylthio-N(6)-dimethylallyladenosine synthase (458 aa).

Positions 2-118 (PKLYIKTYGC…VFEHVDGILR (117 aa)) constitute an MTTase N-terminal domain. [4Fe-4S] cluster is bound by residues Cys-11, Cys-47, Cys-81, Cys-170, Cys-174, and Cys-177. Residues 156-389 (PGVRSTAYVS…LAVVNEIAIR (234 aa)) enclose the Radical SAM core domain. The TRAM domain maps to 392 to 455 (RDLVGTVQEV…GFTLYGVPCP (64 aa)).

This sequence belongs to the methylthiotransferase family. MiaB subfamily. As to quaternary structure, monomer. [4Fe-4S] cluster is required as a cofactor.

It localises to the cytoplasm. The catalysed reaction is N(6)-dimethylallyladenosine(37) in tRNA + (sulfur carrier)-SH + AH2 + 2 S-adenosyl-L-methionine = 2-methylsulfanyl-N(6)-dimethylallyladenosine(37) in tRNA + (sulfur carrier)-H + 5'-deoxyadenosine + L-methionine + A + S-adenosyl-L-homocysteine + 2 H(+). Its function is as follows. Catalyzes the methylthiolation of N6-(dimethylallyl)adenosine (i(6)A), leading to the formation of 2-methylthio-N6-(dimethylallyl)adenosine (ms(2)i(6)A) at position 37 in tRNAs that read codons beginning with uridine. The chain is tRNA-2-methylthio-N(6)-dimethylallyladenosine synthase from Akkermansia muciniphila (strain ATCC BAA-835 / DSM 22959 / JCM 33894 / BCRC 81048 / CCUG 64013 / CIP 107961 / Muc).